The sequence spans 406 residues: Fructose-1,6-bisphosphatase, chloroplastic (406 aa).

The N-terminal 47 residues, 1–47 (MAAAATTSSHLLLLSRQQAAASLQCGLSFRRQPGRLAGGSSAPSVRC), are a transit peptide targeting the chloroplast. Residues glutamate 128, glutamate 157, aspartate 178, leucine 180, and aspartate 181 each coordinate Mg(2+). 181–184 (DGSS) serves as a coordination point for substrate. Cysteine 222 and cysteine 227 form a disulfide bridge. The substrate site is built by asparagine 286, tyrosine 318, tyrosine 336, tyrosine 338, and lysine 348. Mg(2+) is bound at residue glutamate 354.

This sequence belongs to the FBPase class 1 family. Homotetramer. It depends on Mg(2+) as a cofactor.

It localises to the plastid. Its subcellular location is the chloroplast stroma. The catalysed reaction is beta-D-fructose 1,6-bisphosphate + H2O = beta-D-fructose 6-phosphate + phosphate. Its pathway is carbohydrate biosynthesis; Calvin cycle. Inhibited by sodium chloride. Catalyzes the irreversible reaction from fructose-1,6-bisphosphate to fructose-6-phosphate and inorganic phosphate, to regenerate the primary CO(2) acceptor molecule, ribulose-1,5-bisphosphate. Involved in the regulation of photosynthetic performance and sucrose synthesis. The protein is Fructose-1,6-bisphosphatase, chloroplastic of Oryza sativa subsp. indica (Rice).